The chain runs to 107 residues: Large ribosomal subunit protein P1 (107 aa).

Residues 67-82 (PTATSAAAAPAAGEAS) are compositionally biased toward low complexity. Positions 67 to 107 (PTATSAAAAPAAGEASGKAEEKKKEEPEEEGDDDMGFGLFD) are disordered. The segment covering 83–92 (GKAEEKKKEE) has biased composition (basic and acidic residues).

This sequence belongs to the eukaryotic ribosomal protein P1/P2 family. P1 and P2 exist as dimers at the large ribosomal subunit.

Functionally, plays an important role in the elongation step of protein synthesis. The protein is Large ribosomal subunit protein P1 of Leishmania peruviana.